We begin with the raw amino-acid sequence, 145 residues long: MFFFDFLFFFFVCFYMCFVCCVTICLPIELTIVSLLVRGNHFLRFYWCGLERCIACRLCDLICPSLALDVRVGWSFGGHRFADWFTLSYRRCIYCGFCMHVCPTDAITHSLFVMCFCCLAMYLLAPKFLLFGCCFMLFDFYLCFV.

2 consecutive 4Fe-4S ferredoxin-type domains span residues 43 to 73 (LRFY…VRVG) and 83 to 112 (DWFT…HSLF). 8 residues coordinate [4Fe-4S] cluster: Cys53, Cys56, Cys59, Cys63, Cys92, Cys95, Cys98, and Cys102.

The protein belongs to the complex I 23 kDa subunit family. It depends on [4Fe-4S] cluster as a cofactor.

It localises to the mitochondrion. The enzyme catalyses a ubiquinone + NADH + 5 H(+)(in) = a ubiquinol + NAD(+) + 4 H(+)(out). Core subunit of the mitochondrial membrane respiratory chain NADH dehydrogenase (Complex I) that is believed to belong to the minimal assembly required for catalysis. Complex I functions in the transfer of electrons from NADH to the respiratory chain. The immediate electron acceptor for the enzyme is believed to be ubiquinone. May donate electrons to ubiquinone. This Trypanosoma brucei brucei protein is NADH-ubiquinone oxidoreductase subunit 8 (M-ISP1).